The following is a 155-amino-acid chain: FHA domain-containing protein FhaB (155 aa).

The chain crosses the membrane as a helical span at residues 6–28 (LQLTRAGFLMLLWVFIWSVLRIL). Phosphothreonine is present on T36. The FHA domain occupies 83–132 (VLIGRADDSTLVLTDDYASTRHARLSMRGSEWYVEDLGSTNGTYLDRAKV).

Post-translationally, phosphorylated by PknB. Dephosphorylated by PstP.

It is found in the cell membrane. The polypeptide is FHA domain-containing protein FhaB (fhaB) (Mycobacterium tuberculosis (strain CDC 1551 / Oshkosh)).